Here is a 1394-residue protein sequence, read N- to C-terminus: MNQEVMNLFNPVVQPQAFDQIQISIASPEKILSWSYGEIKKPETINYRTFKPERDGLFCARIFGPIKDYECLCGKYKRMKYKGVICEKCGVEVTLSRVRRERMGHISLAAPVAHIWFLKSLPSRIGLLLDMTLKDLERILYFESYIVLDPGLTPLKDRQLLNEEDYLKAQDEYGQDSFTALIGAEAIREILRNMDLPKIAEDLKVEIAESTTELKPKKLAKRLKIIEAFMHSGNKPEWMILTEVPVIPPDLRPLVPLDGGRFATSDLNDLYRRVINRNNRLKRLIELRAPDIIVRNEKRMLQEAVDALFDNGRRGRVITGANKRPLKSLADMLKGKQGRFRQNLLGKRVDYSGRSVIVVGPELKLHQCGLPKKMALELFKPFIYSRLDAKGFSATVKQAKKLVEKEKPEVWDILDEVIREHPVMLNRAPTLHRLGIQAFEPKLIEGKAIQLHPLVCAAFNADFDGDQMAVHVPLSLEAQLEARVLMMSTNNILHPANGQPIIVPSQDIVLGLYYVTLMRDGEPGQGMMFANMGEIEHALNAKAITLHTKIKGRAWTFDENGEKVSKIFDTTPGRLILGQLLPHHVKIPFDVVNKLMTKKEISNMIDIVYRNCGQKETVIFCDRIMALGFREAFKAGISFGKDDMVVPETKPRIIEETSALAKEYEQQYNDGLITQVEKYNKVVDAWGKCSVKLADEMMARISAVQKDDDGRDKPINSIYMMSHSGARGSPTQMKQLAAMRGLMAKPSGEIIETPIISNFKEGLTVLEYFNSTHGARKGLADTALKTANSGYLTRRLVDVAQDAIITIPDCHSENGIRMRAIIDAGQIVASLETRILGRTAAEDLREADGTIIVPAGEMIEEIHVGRINAAGIQEVKIRSVLTCEAKNGVCAKCYGRDLARGTPVNMGEAVGVIAAQSIGEPGTQLTMRTFHIGGAAQIADQSFIESNFEGTVKIRNRHVARNTDGDLMVMARNVAVVIDGPDGTELAVHRVQYGARLKVDEGDKIKRGQRIAEWDPYTRPILTEIDGTIGFEDLVEGASMTETIDEATGIAKRMVIDWRLNQRSASLKPAMVIKTADGKVGKLQRGGEARYMLPVDSIIGVDPGGSVKAGDVIARISMESAKTRDITGGLPRVAELFEARRPKDHAIIAEASGTVQFGRDYKNKTRISIVPHEDGAEPIEYLIPKGKHIYLQDGDVVEKGDYIVDGNPAPHDILAIKGVEELAAYLVNEIQEVYRLQGVSINDKHIEVIVRQMLQKVDIVDSGDTDFLPGEQVDQLEFEEANIQAVENGGKPATGTPVLLGITKASLQTRSFISAASFQETTRVLTEAAVNGKADTLEGLKENVIVGRLIPAGTGAAMAKLRRVAVQRDELILAQKAETSEAPLVPIPHLPAAE.

4 residues coordinate Zn(2+): Cys71, Cys73, Cys86, and Cys89. Residues Asp462, Asp464, and Asp466 each coordinate Mg(2+). The Zn(2+) site is built by Cys810, Cys883, Cys890, and Cys893.

This sequence belongs to the RNA polymerase beta' chain family. The RNAP catalytic core consists of 2 alpha, 1 beta, 1 beta' and 1 omega subunit. When a sigma factor is associated with the core the holoenzyme is formed, which can initiate transcription. Mg(2+) is required as a cofactor. Requires Zn(2+) as cofactor.

The enzyme catalyses RNA(n) + a ribonucleoside 5'-triphosphate = RNA(n+1) + diphosphate. Its function is as follows. DNA-dependent RNA polymerase catalyzes the transcription of DNA into RNA using the four ribonucleoside triphosphates as substrates. The sequence is that of DNA-directed RNA polymerase subunit beta' from Beijerinckia indica subsp. indica (strain ATCC 9039 / DSM 1715 / NCIMB 8712).